Reading from the N-terminus, the 393-residue chain is NAD(P)H-quinone oxidoreductase subunit H, chloroplastic (393 aa).

The protein belongs to the complex I 49 kDa subunit family. As to quaternary structure, NDH is composed of at least 16 different subunits, 5 of which are encoded in the nucleus.

Its subcellular location is the plastid. It localises to the chloroplast thylakoid membrane. It catalyses the reaction a plastoquinone + NADH + (n+1) H(+)(in) = a plastoquinol + NAD(+) + n H(+)(out). The catalysed reaction is a plastoquinone + NADPH + (n+1) H(+)(in) = a plastoquinol + NADP(+) + n H(+)(out). Functionally, NDH shuttles electrons from NAD(P)H:plastoquinone, via FMN and iron-sulfur (Fe-S) centers, to quinones in the photosynthetic chain and possibly in a chloroplast respiratory chain. The immediate electron acceptor for the enzyme in this species is believed to be plastoquinone. Couples the redox reaction to proton translocation, and thus conserves the redox energy in a proton gradient. This Trifolium subterraneum (Subterranean clover) protein is NAD(P)H-quinone oxidoreductase subunit H, chloroplastic.